Reading from the N-terminus, the 1003-residue chain is Glycine--tRNA ligase (1003 aa).

The glycine--tRNA ligase alpha subunit stretch occupies residues 1–310; sequence MSSQPLTLQT…VTPKKIPTIC (310 aa). Residues 311-1003 form a glycine--tRNA ligase beta subunit region; sequence QPEDFLLEIG…CFGFYAWGVL (693 aa).

Belongs to the class-II aminoacyl-tRNA synthetase family.

Its subcellular location is the cytoplasm. The catalysed reaction is tRNA(Gly) + glycine + ATP = glycyl-tRNA(Gly) + AMP + diphosphate. This chain is Glycine--tRNA ligase (glyQS), found in Chlamydia trachomatis serovar D (strain ATCC VR-885 / DSM 19411 / UW-3/Cx).